We begin with the raw amino-acid sequence, 31 residues long: Bacteriocin leucocin-B (31 aa).

Its subcellular location is the secreted. Its function is as follows. Inhibits a wide spectrum of lactic acid bacteria. This chain is Bacteriocin leucocin-B, found in Leuconostoc mesenteroides.